A 329-amino-acid polypeptide reads, in one-letter code: Phenylalanine--tRNA ligase alpha subunit (329 aa).

Glu-246 contributes to the Mg(2+) binding site.

This sequence belongs to the class-II aminoacyl-tRNA synthetase family. Phe-tRNA synthetase alpha subunit type 1 subfamily. In terms of assembly, tetramer of two alpha and two beta subunits. Requires Mg(2+) as cofactor.

It localises to the cytoplasm. The catalysed reaction is tRNA(Phe) + L-phenylalanine + ATP = L-phenylalanyl-tRNA(Phe) + AMP + diphosphate + H(+). This chain is Phenylalanine--tRNA ligase alpha subunit, found in Helicobacter hepaticus (strain ATCC 51449 / 3B1).